The chain runs to 148 residues: Large ribosomal subunit protein bL19 (148 aa).

This sequence belongs to the bacterial ribosomal protein bL19 family.

Its function is as follows. This protein is located at the 30S-50S ribosomal subunit interface and may play a role in the structure and function of the aminoacyl-tRNA binding site. In Beijerinckia indica subsp. indica (strain ATCC 9039 / DSM 1715 / NCIMB 8712), this protein is Large ribosomal subunit protein bL19.